Reading from the N-terminus, the 208-residue chain is uncharacterized protein (208 aa).

Disordered regions lie at residues 1–78 (MDLF…SPTE) and 154–208 (RRRS…PRNY). Basic residues predominate over residues 40 to 51 (KNHKKAQPRRTT). Positions 179–197 (ANSSSPNPTATGSETSYGS) are enriched in polar residues.

This is an uncharacterized protein from Caenorhabditis elegans.